A 216-amino-acid chain; its full sequence is Protein Syd (216 aa).

Belongs to the Syd family.

It is found in the cell inner membrane. Functionally, interacts with the SecY protein in vivo. May bind preferentially to an uncomplexed state of SecY, thus functioning either as a chelating agent for excess SecY in the cell or as a regulatory factor that negatively controls the translocase function. This Shewanella frigidimarina (strain NCIMB 400) protein is Protein Syd.